The following is a 521-amino-acid chain: RING-type E3 ubiquitin-protein ligase PPIL2 (521 aa).

The U-box domain occupies 35–108 (RRLPFDHCSL…GQYHCPVLYS (74 aa)). Residues 197 to 217 (LKNTNSETRETLQELYKEFKG) adopt a coiled-coil conformation. A Glycyl lysine isopeptide (Lys-Gly) (interchain with G-Cter in SUMO2) cross-link involves residue Lys216. In terms of domain architecture, PPIase cyclophilin-type spans 278 to 433 (KKGYVRLHTN…EEVLICTTTV (156 aa)). Residues 447–462 (QERKKTQHQVDPEAKV) are compositionally biased toward basic and acidic residues. The interval 447–521 (QERKKTQHQV…SRGFGDFSSW (75 aa)) is disordered. A compositionally biased stretch (polar residues) spans 465–478 (SQPQPGNQGPQTYR). Lys483 carries the N6-acetyllysine modification.

This sequence belongs to the cyclophilin-type PPIase family. PPIL2 subfamily. As to quaternary structure, component of the minor spliceosome, which splices U12-type introns. Within this complex, interacts with PRPF8/PRP8, EFTUD2/SNU114 and PLRG1. Interacts with isoform 2 of BSG. Interacts (via the PPIase cyclophilin-type domain) with CRNKL1; they may form a trimeric complex with HSP90.

Its subcellular location is the nucleus. The enzyme catalyses S-ubiquitinyl-[E2 ubiquitin-conjugating enzyme]-L-cysteine + [acceptor protein]-L-lysine = [E2 ubiquitin-conjugating enzyme]-L-cysteine + N(6)-ubiquitinyl-[acceptor protein]-L-lysine.. It functions in the pathway protein modification; protein ubiquitination. Its function is as follows. Has a ubiquitin-protein ligase activity acting as an E3 ubiquitin protein ligase or as an ubiquitin-ubiquitin ligase promoting elongation of ubiquitin chains on substrates. By mediating 'Lys-48'-linked polyubiquitination of proteins could target them for proteasomal degradation. May also function as a chaperone, playing a role in transport to the cell membrane of BSG/Basigin for instance. Probable inactive PPIase with no peptidyl-prolyl cis-trans isomerase activity. As a component of the minor spliceosome, involved in the splicing of U12-type introns in pre-mRNAs. The protein is RING-type E3 ubiquitin-protein ligase PPIL2 of Mus musculus (Mouse).